A 780-amino-acid chain; its full sequence is Pendrin (780 aa).

At 1 to 87 (MAAPGGRSEP…YRVKEWLLSD (87 aa)) the chain is on the cytoplasmic side. A helical membrane pass occupies residues 88-108 (VISGVSTGLVATLQGMAYALL). Position 109 (alanine 109) is a topological domain, extracellular. A helical transmembrane segment spans residues 110 to 130 (AVPVGYGLYSAFFPILTYFIF). The Cytoplasmic portion of the chain corresponds to 131 to 135 (GTSRH). Residues 136-156 (ISVGPFPVVSLMVGSVVLSMA) form a helical membrane-spanning segment. Topologically, residues 157–191 (PDEHFLVSSSNGTVLNTTMIDTAARDTARVLIASA) are extracellular. Residues 192 to 212 (LTLLVGIIQLIFGGLQIGFIV) traverse the membrane as a helical segment. The Cytoplasmic segment spans residues 213–218 (RYLADP). The helical transmembrane segment at 219 to 239 (LVGGFTTAAAFQVLVSQLKIV) threads the bilayer. At 240–263 (LNVSTKNYNGVLSIIYTLVEIFQN) the chain is on the extracellular side. The chain crosses the membrane as a helical span at residues 264 to 284 (IGDTNLADFTAGLLTIVVCMA). Residues 285–295 (VKELNDRFRHK) are Cytoplasmic-facing. A helical transmembrane segment spans residues 296-316 (IPVPIPIEVIVTIIATAISYG). Over 317-344 (ANLEKNYNAGIVKSIPRGFLPPELPPVS) the chain is Extracellular. Residues 345–365 (LFSEMLAASFSIAVVAYAIAV) form a helical membrane-spanning segment. Over 366–384 (SVGKVYATKYDYTIDGNQE) the chain is Cytoplasmic. Residues 385 to 405 (FIAFGISNIFSGFFSCFVATT) traverse the membrane as a helical segment. The Extracellular portion of the chain corresponds to 406–421 (ALSRTAVQESTGGKTQ). The helical transmembrane segment at 422 to 442 (VAGIISAAIVMIAILALGKLL) threads the bilayer. Residues 443 to 448 (EPLQKS) lie on the Cytoplasmic side of the membrane. The helical transmembrane segment at 449–469 (VLAAVVIANLKGMFMQLCDIP) threads the bilayer. The Extracellular segment spans residues 470–486 (RLWRQNKIDAVIWVFTC). Residues 487–507 (IVSIILGLDLGLLAGLIFGLL) form a helical membrane-spanning segment. At 508–780 (TVVLRVQFPS…QDEAMRTLAS (273 aa)) the chain is on the cytoplasmic side. One can recognise an STAS domain in the interval 535 to 729 (NYKNIEEPQG…LTVHDAILYL (195 aa)).

It belongs to the SLC26A/SulP transporter (TC 2.A.53) family. In terms of assembly, interacts with IQGAP1; this interaction enhances the chloride-bicarbonate exchange activity of SLC26A4. In terms of tissue distribution, highly expressed in the kidney (at protein level). High expression in adult thyroid, lower expression in adult and fetal kidney and fetal brain. Not expressed in other tissues.

Its subcellular location is the cell membrane. It is found in the apical cell membrane. The enzyme catalyses chloride(in) = chloride(out). It carries out the reaction iodide(out) = iodide(in). The catalysed reaction is hydrogencarbonate(in) + chloride(out) = hydrogencarbonate(out) + chloride(in). It catalyses the reaction iodide(in) + hydrogencarbonate(out) = iodide(out) + hydrogencarbonate(in). The enzyme catalyses iodide(in) + chloride(out) = iodide(out) + chloride(in). It carries out the reaction formate(in) + chloride(out) = formate(out) + chloride(in). Sodium-independent transporter of chloride and iodide. Mediates electroneutral chloride-bicarbonate, chloride-iodide and chloride-formate exchange with 1:1 stoichiometry. Mediates electroneutral iodide-bicarbonate exchange. In Homo sapiens (Human), this protein is Pendrin (SLC26A4).